Here is a 772-residue protein sequence, read N- to C-terminus: U3 small nucleolar RNA-associated protein 25 homolog (772 aa).

Residues 1-179 form a disordered region; it reads MGKRRNRGRS…SEEFTDVKHE (179 aa). Promotes p53/TP53 degradation stretches follow at residues 1–201 and 589–651; these read MGKR…SQRP and VQLP…KKEE. At serine 10 the chain carries Phosphoserine. Residues 25 to 43 are compositionally biased toward basic and acidic residues; that stretch reads RDFGEEHPFYDRVSKKEAK. Phosphoserine is present on residues serine 52, serine 60, and serine 64. The segment covering 54–70 has biased composition (basic and acidic residues); sequence DSSHSESESESEQEHVS. Positions 84-124 are enriched in acidic residues; the sequence is EEEEEEEEEEEEEEEEEEEEEEEEEDDSAVGDAEMNEEAGS. Residues 127–136 show a composition bias toward low complexity; that stretch reads GSVGEAAVSE. Basic and acidic residues predominate over residues 169 to 179; the sequence is SSEEFTDVKHE. A represses p53/TP53 degradation region spans residues 652-713; that stretch reads LNFTHICEYT…YELPTYPHFY (62 aa).

The protein belongs to the UTP25 family. As to quaternary structure, interacts with CAPN3; the interaction is required for CAPN3 translocation to the nucleolus. Post-translationally, phosphorylated. Phosphorylation is required to promote p53/TP53 degradation in the nucleolus which promotes cell cycle progression and liver development. As to expression, expressed in all tissues tested: brain, small intestine, large intestine, stomach, liver, spleen, thymus, lung, kidney and testes (at protein level).

The protein resides in the nucleus. Its subcellular location is the nucleolus. Its function is as follows. Component of the ribosomal small subunit processome for the biogenesis of ribosomes, functions in pre-ribosomal RNA (pre-rRNA) processing. Essential for embryonic development in part through the regulation of p53 pathway. Controls the expansion growth of digestive organs and liver. Also involved in the sympathetic neuronal development. Mediates, with CAPN3, the proteasome-independent degradation of p53/TP53. The chain is U3 small nucleolar RNA-associated protein 25 homolog from Mus musculus (Mouse).